The primary structure comprises 116 residues: Large ribosomal subunit protein bL20 (116 aa).

This sequence belongs to the bacterial ribosomal protein bL20 family.

Its function is as follows. Binds directly to 23S ribosomal RNA and is necessary for the in vitro assembly process of the 50S ribosomal subunit. It is not involved in the protein synthesizing functions of that subunit. This chain is Large ribosomal subunit protein bL20, found in Bacteroides thetaiotaomicron (strain ATCC 29148 / DSM 2079 / JCM 5827 / CCUG 10774 / NCTC 10582 / VPI-5482 / E50).